Reading from the N-terminus, the 295-residue chain is Probable dTDP-4,6-dihydroxy-2-methyloxan-3-one 4-ketoreductase (295 aa).

Residues 10 to 12 (GML), 36 to 37 (DV), 60 to 62 (AYT), Y126, and K130 contribute to the NADH site. NADPH is bound by residues 11–12 (ML), 36–37 (DV), 60–62 (AYT), Y126, and K130. Catalysis depends on Y126, which acts as the Proton donor/acceptor.

The protein belongs to the dTDP-4-dehydrorhamnose reductase family. Mg(2+) serves as cofactor.

It participates in antibiotic biosynthesis. Functionally, involved in the biosynthesis of one of the two 2,6-deoxysugars, dTDP-L-oleandrose, attached to the macrolactone ring oleandolide to produce the aglycone antibiotic oleandomycin. Probably catalyzes the reduction of dTDP-4-keto-2,6-dideoxy-beta-L-galactose to yield dTDP-L-olivose. The chain is Probable dTDP-4,6-dihydroxy-2-methyloxan-3-one 4-ketoreductase from Streptomyces antibioticus.